A 178-amino-acid chain; its full sequence is PRA1 family protein 2 (178 aa).

Over 1–41 the chain is Cytoplasmic; it reads MSEVRLPPLRALDDFVLGSARLAAPDPCDPQRWCHRVINNL. The chain crosses the membrane as a helical span at residues 42-62; that stretch reads LYYQTNYLLCFGIGLALAGYV. Topologically, residues 63-64 are extracellular; sequence RP. A helical transmembrane segment spans residues 65–85; the sequence is LHTLLSALVVAVALGMLVWAA. Topologically, residues 86–96 are cytoplasmic; sequence ETRAAVRRCRR. Residues 97–119 traverse the membrane as a helical segment; it reads SHPAACLAAVLAVGLLVLWVVGG. The Extracellular segment spans residues 120–122; sequence ACT. A helical transmembrane segment spans residues 123 to 140; the sequence is FLLSIAGPVLLILVHASL. The Cytoplasmic segment spans residues 141 to 178; that stretch reads RLRNLKNKIENKIESIGLKRTPMGLLLEALGQEQEAGS.

Belongs to the PRA1 family. As to quaternary structure, interacts with CCR5 and GDE1.

The protein localises to the endosome membrane. May be involved in ER/Golgi transport and vesicular traffic. Plays a proapoptotic role in cerulenin-induced neuroblastoma apoptosis. The chain is PRA1 family protein 2 (PRAF2) from Macaca fascicularis (Crab-eating macaque).